Reading from the N-terminus, the 172-residue chain is NAD(P)H-quinone oxidoreductase subunit I, chloroplastic (172 aa).

4Fe-4S ferredoxin-type domains follow at residues 55–84 (GRIH…VDWK) and 95–124 (LNYS…MTEE). 8 residues coordinate [4Fe-4S] cluster: cysteine 64, cysteine 67, cysteine 70, cysteine 74, cysteine 104, cysteine 107, cysteine 110, and cysteine 114.

Belongs to the complex I 23 kDa subunit family. As to quaternary structure, NDH is composed of at least 16 different subunits, 5 of which are encoded in the nucleus. [4Fe-4S] cluster is required as a cofactor.

The protein localises to the plastid. Its subcellular location is the chloroplast thylakoid membrane. The catalysed reaction is a plastoquinone + NADH + (n+1) H(+)(in) = a plastoquinol + NAD(+) + n H(+)(out). The enzyme catalyses a plastoquinone + NADPH + (n+1) H(+)(in) = a plastoquinol + NADP(+) + n H(+)(out). Functionally, NDH shuttles electrons from NAD(P)H:plastoquinone, via FMN and iron-sulfur (Fe-S) centers, to quinones in the photosynthetic chain and possibly in a chloroplast respiratory chain. The immediate electron acceptor for the enzyme in this species is believed to be plastoquinone. Couples the redox reaction to proton translocation, and thus conserves the redox energy in a proton gradient. In Olimarabidopsis pumila (Dwarf rocket), this protein is NAD(P)H-quinone oxidoreductase subunit I, chloroplastic.